The chain runs to 407 residues: Probable peptidoglycan glycosyltransferase FtsW (407 aa).

The Cytoplasmic segment spans residues 1–25 (MSIDFRNIIKPYPSPIITGRGIDLD). A helical membrane pass occupies residues 26–46 (FPMLAGCLALLGLGLVMITSA). Residues 47–65 (SSEVAAVQSGNTLYMMIRH) lie on the Periplasmic side of the membrane. The helical transmembrane segment at 66 to 86 (LVYLVIGLGACIVTMMIPIAT) threads the bilayer. Residues 87 to 89 (WQR) are Cytoplasmic-facing. Residues 90 to 110 (LGWLMLIGAFGLLIMVILPGI) form a helical membrane-spanning segment. At 111–119 (GREVNGSMR) the chain is on the periplasmic side. A helical membrane pass occupies residues 120–140 (WIGFGAFNVQPSEIAKVFVVI). Residues 141-155 (YLAGYLVRRQKEVRE) are Cytoplasmic-facing. The chain crosses the membrane as a helical span at residues 156–176 (SWMGFFKPFIVLLPMAGLLLM). Residues 177 to 181 (EPDFG) lie on the Periplasmic side of the membrane. The helical transmembrane segment at 182–202 (ATVVMMGAAAAMLFLGGVGLF) threads the bilayer. Position 203 (R203) is a topological domain, cytoplasmic. Residues 204-224 (FTLMVVLAVAAVTVLVQAQPY) traverse the membrane as a helical segment. Residues 225–283 (RMARLITFTDPWSDQFGSGYQLTQALIAFGRGEWLGVGLGNSVQKQFYLPEAHTDFVFS) lie on the Periplasmic side of the membrane. A helical membrane pass occupies residues 284 to 304 (VLAEELGVVGSLCTVALFVFV). Residues 305 to 321 (CVRGMYIGMWAEKAKQY) lie on the Cytoplasmic side of the membrane. The chain crosses the membrane as a helical span at residues 322 to 342 (FAAYVAYGLSFLWIGQFLINI). The Periplasmic segment spans residues 343-355 (GVNVGLLPTKGLT). Residues 356–376 (LPFLSYGGSSLVICCACLGLL) form a helical membrane-spanning segment. The Cytoplasmic segment spans residues 377–407 (LRIEWESRTHLGSEEMEFSESDFAEEPTHGR).

The protein belongs to the SEDS family. FtsW subfamily.

It is found in the cell inner membrane. It catalyses the reaction [GlcNAc-(1-&gt;4)-Mur2Ac(oyl-L-Ala-gamma-D-Glu-L-Lys-D-Ala-D-Ala)](n)-di-trans,octa-cis-undecaprenyl diphosphate + beta-D-GlcNAc-(1-&gt;4)-Mur2Ac(oyl-L-Ala-gamma-D-Glu-L-Lys-D-Ala-D-Ala)-di-trans,octa-cis-undecaprenyl diphosphate = [GlcNAc-(1-&gt;4)-Mur2Ac(oyl-L-Ala-gamma-D-Glu-L-Lys-D-Ala-D-Ala)](n+1)-di-trans,octa-cis-undecaprenyl diphosphate + di-trans,octa-cis-undecaprenyl diphosphate + H(+). The protein operates within cell wall biogenesis; peptidoglycan biosynthesis. Functionally, peptidoglycan polymerase that is essential for cell division. This Pseudomonas fluorescens (strain SBW25) protein is Probable peptidoglycan glycosyltransferase FtsW.